A 258-amino-acid polypeptide reads, in one-letter code: Alpha-fibrinogenase (258 aa).

Positions 1–18 (MVLIRVLANLVMLHLSYG) are cleaved as a signal peptide. A propeptide spanning residues 19–24 (EKSSEL) is cleaved from the precursor. One can recognise a Peptidase S1 domain in the interval 25–249 (VIGGRPCNIN…YNDWIQSIIA (225 aa)). Disulfide bonds link cysteine 31-cysteine 163, cysteine 50-cysteine 66, cysteine 98-cysteine 256, cysteine 142-cysteine 210, cysteine 174-cysteine 189, and cysteine 200-cysteine 225. N-linked (GlcNAc...) asparagine glycosylation is present at asparagine 44. Residue histidine 65 is the Charge relay system of the active site. Residues asparagine 79 and asparagine 101 are each glycosylated (N-linked (GlcNAc...) asparagine). Aspartate 110 acts as the Charge relay system in catalysis. Catalysis depends on serine 204, which acts as the Charge relay system.

This sequence belongs to the peptidase S1 family. Snake venom subfamily. In terms of assembly, monomer. Post-translationally, glycosylated. Contains 8.5% of hexoses, 5.8% of hexosamines and 0.8% of sialic acids. In terms of tissue distribution, expressed by the venom gland.

It localises to the secreted. Its activity is regulated as follows. Inhibited by diisopropylfluorophosphate (DFP) and PMSF, and partially by soybean trypsin inhibitor, but not by EDTA. Functionally, degrades alpha chain of fibrinogen (FGA), and has strong caseinolytic activity. Cleaves oxidized insulin B-chain at '40-Tyr-|-Leu-41', '48-Phe-|-Phe-49' and '49-Phe-|-Tyr-50', and glucagon at the bonds '62-Tyr-|-Ser-63', 66-Leu-|-Asp-67' and '78-Leu-|-Met-79' bonds. This is Alpha-fibrinogenase from Macrovipera lebetinus (Levantine viper).